The sequence spans 249 residues: Small ribosomal subunit protein eS6 (249 aa).

2 disordered regions span residues 161-181 and 194-249; these read PLAK…RLVT and LKKQ…SSQK. Over residues 216 to 229 the composition is skewed to basic and acidic residues; it reads RSKEAKEKRQEQIA. 5 positions are modified to phosphoserine: S235, S236, S240, S244, and S247. Over residues 236 to 249 the composition is skewed to low complexity; sequence SLRASTSKSESSQK.

Belongs to the eukaryotic ribosomal protein eS6 family. In terms of assembly, component of the small ribosomal subunit. Part of the small subunit (SSU) processome, composed of more than 70 proteins and the RNA chaperone small nucleolar RNA (snoRNA) U3. Post-translationally, ribosomal protein S6 is the major substrate of protein kinases in eukaryote ribosomes. The phosphorylation is stimulated by growth factors, tumor promoting agents, and mitogens. It is dephosphorylated at growth arrest.

Its subcellular location is the cytoplasm. It localises to the nucleus. The protein resides in the nucleolus. In terms of biological role, component of the 40S small ribosomal subunit. Plays an important role in controlling cell growth and proliferation through the selective translation of particular classes of mRNA. Part of the small subunit (SSU) processome, first precursor of the small eukaryotic ribosomal subunit. During the assembly of the SSU processome in the nucleolus, many ribosome biogenesis factors, an RNA chaperone and ribosomal proteins associate with the nascent pre-rRNA and work in concert to generate RNA folding, modifications, rearrangements and cleavage as well as targeted degradation of pre-ribosomal RNA by the RNA exosome. This is Small ribosomal subunit protein eS6 (rps6) from Xenopus laevis (African clawed frog).